Reading from the N-terminus, the 104-residue chain is Pterin-4-alpha-carbinolamine dehydratase (104 aa).

At alanine 2 the chain carries N-acetylalanine. Substrate contacts are provided by residues 61–63 and 78–81; these read DHH and STHE.

It belongs to the pterin-4-alpha-carbinolamine dehydratase family. In terms of assembly, homotetramer and homodimer. Heterotetramer with HNF1A; formed by a dimer of dimers. Interacts with HNF1B (via HNF-p1 domain); the interaction increases HNF1B transactivation activity.

The protein resides in the cytoplasm. The protein localises to the nucleus. It catalyses the reaction (4aS,6R)-4a-hydroxy-L-erythro-5,6,7,8-tetrahydrobiopterin = (6R)-L-erythro-6,7-dihydrobiopterin + H2O. Functionally, involved in tetrahydrobiopterin biosynthesis. Seems to both prevent the formation of 7-pterins and accelerate the formation of quinonoid-BH2. Coactivator for HNF1A-dependent transcription. Regulates the dimerization of homeodomain protein HNF1A and enhances its transcriptional activity. Also acts as a coactivator for HNF1B-dependent transcription. The protein is Pterin-4-alpha-carbinolamine dehydratase (Pcbd1) of Rattus norvegicus (Rat).